Here is a 198-residue protein sequence, read N- to C-terminus: MTDFALNAEVRSDLGKGASRRLRRNAAQVPAVIYGGDKEPQSISILAKDITKLIEDEAAFSHVITLNIAGATETVLIKALQRHPSKAAVMHADFLRVVADHKLSAVVPLHFVNAETSVGVKQQGGEVSHVISEVEVSCLPKDLPEFIEVDLAQVEVGQIVHLSNLSVPAGVELVALAHGNDLAVANIHASRVKEEGAE.

Belongs to the bacterial ribosomal protein bL25 family. CTC subfamily. As to quaternary structure, part of the 50S ribosomal subunit; part of the 5S rRNA/L5/L18/L25 subcomplex. Contacts the 5S rRNA. Binds to the 5S rRNA independently of L5 and L18.

In terms of biological role, this is one of the proteins that binds to the 5S RNA in the ribosome where it forms part of the central protuberance. This is Large ribosomal subunit protein bL25 from Azotobacter vinelandii (strain DJ / ATCC BAA-1303).